A 394-amino-acid chain; its full sequence is Venom metalloproteinase antarease TserMP_A (394 aa).

Positions 1-16 are cleaved as a signal peptide; sequence MISYLASIFLLATVSA. Positions 17–157 are excised as a propeptide; the sequence is VPSGRVEVVF…NAENVSRMAR (141 aa). Residues 162 to 391 enclose the Peptidase M12B domain; the sequence is IVVEYYIVTD…PTASCIFQQC (230 aa). A disulfide bridge links Cys295 with Cys386. Position 319 (His319) interacts with Zn(2+). Residue Glu320 is part of the active site. Zn(2+) contacts are provided by His323 and His329.

It depends on Zn(2+) as a cofactor. Post-translationally, contains 4 disulfide bonds. As to expression, expressed by the venom gland.

The protein resides in the secreted. With respect to regulation, inhibited by EDTA. Functionally, acts as a metalloprotease. Penetrates intact tissue and specifically cleaves the vesicle-associated membrane protein 2 (VAMP2) (part of the SNARE complex) involved in pancreatic secretion, thus disrupting the normal vesicular traffic. This Tityus serrulatus (Brazilian scorpion) protein is Venom metalloproteinase antarease TserMP_A.